We begin with the raw amino-acid sequence, 344 residues long: MPRVYIGRLSYNVREKDIQRFFSGYGRLLEVDLKNGYGFVEFEDSRDADDAVYELNGKELCGERVIVEHARGPRRDRDGYSYGSRSGGGGYSSRRTSGRDKYGPPVRTEYRLIVENLSSRCSWQDLKDFMRQAGEVTYADAHKERTNEGVIEFRSYSDMKRALDKLDGTEINGRNIRLIEDKPRTSHRRSYSGSRSRSRSRRRSRSRSRRSSRSRSRSISKSRSRSRSRSKGRSRSRSKGRKSRSKSKSKPKSDRGSHSHSRSRSKDEYEKSRSRSRSRSPKENGKGDIKSKSRSRSQSRSNSPLPVPPSKARSVSPPPKRATSRSRSRSRSKSRSRSRSSSRD.

Residues 1 to 72 (MPRVYIGRLS…ERVIVEHARG (72 aa)) form the RRM 1 domain. Phosphoserine is present on residues Ser-45, Ser-81, and Ser-84. Residues 75–103 (RDRDGYSYGSRSGGGGYSSRRTSGRDKYG) are disordered. Residues 110–183 (YRLIVENLSS…RNIRLIEDKP (74 aa)) form the RRM 2 domain. Lys-165 carries the post-translational modification N6-acetyllysine. The tract at residues 176-344 (IRLIEDKPRT…RSRSRSSSRD (169 aa)) is disordered. A Glycyl lysine isopeptide (Lys-Gly) (interchain with G-Cter in SUMO2) cross-link involves residue Lys-182. Basic residues predominate over residues 185 to 250 (TSHRRSYSGS…RKSRSKSKSK (66 aa)). Composition is skewed to basic and acidic residues over residues 264–273 (RSKDEYEKSR) and 280–291 (SPKENGKGDIKS). Ser-297 and Ser-299 each carry phosphoserine. Ser-303 carries the post-translational modification Phosphoserine; by DYRK1A. Ser-314 and Ser-316 each carry phosphoserine. Residues 322–344 (ATSRSRSRSRSKSRSRSRSSSRD) show a composition bias toward basic residues.

Belongs to the splicing factor SR family. As to quaternary structure, binds SREK1/SFRS12. Interacts with DYRK1A. In terms of processing, extensively phosphorylated on serine residues in the RS domain. Phosphorylated by DYRK1A, probably in the RS domain. Phosphorylation by DYRK1A modulates alternative splice site selection and inhibits the expression of MAPT/Tau exon 10.

It is found in the nucleus. Its subcellular location is the nucleus speckle. In terms of biological role, plays a role in constitutive splicing and modulates the selection of alternative splice sites. Plays a role in the alternative splicing of MAPT/Tau exon 10. Binds to alternative exons of TNC pre-mRNA and promotes the expression of alternatively spliced TNC. Plays a role in wound healing and in the regulation of keratinocyte differentiation and proliferation via its role in alternative splicing. The polypeptide is Serine/arginine-rich splicing factor 6 (SRSF6) (Homo sapiens (Human)).